The sequence spans 162 residues: Protein lon-8 (162 aa).

The N-terminal stretch at methionine 1 to alanine 23 is a signal peptide.

It is found in the secreted. Secreted protein that is involved in larval elongation, early adult growth and male tail development. The sequence is that of Protein lon-8 from Caenorhabditis elegans.